Here is a 454-residue protein sequence, read N- to C-terminus: tRNA modification GTPase MnmE (454 aa).

The (6S)-5-formyl-5,6,7,8-tetrahydrofolate site is built by Arg26, Glu84, and Lys123. The TrmE-type G domain maps to Gly219–Gly378. Asn229 lines the K(+) pocket. Residues Asn229–Ser234, Thr248–Thr254, and Asp273–Gly276 contribute to the GTP site. Mg(2+) is bound at residue Ser233. K(+) contacts are provided by Thr248, Ile250, and Thr253. Thr254 contacts Mg(2+). Lys454 is a binding site for (6S)-5-formyl-5,6,7,8-tetrahydrofolate.

Belongs to the TRAFAC class TrmE-Era-EngA-EngB-Septin-like GTPase superfamily. TrmE GTPase family. In terms of assembly, homodimer. Heterotetramer of two MnmE and two MnmG subunits. Requires K(+) as cofactor.

It is found in the cytoplasm. Exhibits a very high intrinsic GTPase hydrolysis rate. Involved in the addition of a carboxymethylaminomethyl (cmnm) group at the wobble position (U34) of certain tRNAs, forming tRNA-cmnm(5)s(2)U34. The protein is tRNA modification GTPase MnmE of Acinetobacter baumannii (strain ATCC 17978 / DSM 105126 / CIP 53.77 / LMG 1025 / NCDC KC755 / 5377).